The following is a 215-amino-acid chain: MPHSQTSAPRGRVRLARGASPWLLPTVATAALSLVRARRSGAAKAVAVPATALAAGMLWFFRDPEREITQGRVISPADGVVQSIMPWKDGRTRVAIFMSPLNVHVNRAPLSGTVTSVEHIPGGFVPAFNKESENNERVVWHFDTELGDIEMIQIAGAVARRIVPYVPQGTKVEQGDRIGLIRFGSRVDIYLPEGVDVDVEVGQKTVAGVTRIDRD.

Ser185 serves as the catalytic Schiff-base intermediate with substrate; via pyruvic acid. Pyruvic acid (Ser); by autocatalysis is present on Ser185.

It belongs to the phosphatidylserine decarboxylase family. PSD-A subfamily. As to quaternary structure, heterodimer of a large membrane-associated beta subunit and a small pyruvoyl-containing alpha subunit. The cofactor is pyruvate. Post-translationally, is synthesized initially as an inactive proenzyme. Formation of the active enzyme involves a self-maturation process in which the active site pyruvoyl group is generated from an internal serine residue via an autocatalytic post-translational modification. Two non-identical subunits are generated from the proenzyme in this reaction, and the pyruvate is formed at the N-terminus of the alpha chain, which is derived from the carboxyl end of the proenzyme. The post-translation cleavage follows an unusual pathway, termed non-hydrolytic serinolysis, in which the side chain hydroxyl group of the serine supplies its oxygen atom to form the C-terminus of the beta chain, while the remainder of the serine residue undergoes an oxidative deamination to produce ammonia and the pyruvoyl prosthetic group on the alpha chain.

The protein localises to the cell membrane. The enzyme catalyses a 1,2-diacyl-sn-glycero-3-phospho-L-serine + H(+) = a 1,2-diacyl-sn-glycero-3-phosphoethanolamine + CO2. It functions in the pathway phospholipid metabolism; phosphatidylethanolamine biosynthesis; phosphatidylethanolamine from CDP-diacylglycerol: step 2/2. Functionally, catalyzes the formation of phosphatidylethanolamine (PtdEtn) from phosphatidylserine (PtdSer). This Streptomyces avermitilis (strain ATCC 31267 / DSM 46492 / JCM 5070 / NBRC 14893 / NCIMB 12804 / NRRL 8165 / MA-4680) protein is Phosphatidylserine decarboxylase proenzyme.